A 354-amino-acid chain; its full sequence is Peptide chain release factor 1 (354 aa).

Glutamine 231 carries the N5-methylglutamine modification.

Belongs to the prokaryotic/mitochondrial release factor family. In terms of processing, methylated by PrmC. Methylation increases the termination efficiency of RF1.

It is found in the cytoplasm. In terms of biological role, peptide chain release factor 1 directs the termination of translation in response to the peptide chain termination codons UAG and UAA. The protein is Peptide chain release factor 1 of Acholeplasma laidlawii (strain PG-8A).